The sequence spans 262 residues: 4-hydroxy-2-oxovalerate aldolase (262 aa).

His48 serves as the catalytic Proton acceptor. A substrate-binding site is contributed by Gln149. Residue Glu151 participates in Mg(2+) binding. Substrate is bound by residues Ala176 and Asp177. Asp177 provides a ligand contact to Mg(2+).

Belongs to the HpcH/HpaI aldolase family.

The catalysed reaction is (S)-4-hydroxy-2-oxopentanoate = acetaldehyde + pyruvate. The protein operates within xenobiotic degradation; biphenyl degradation. In terms of biological role, catalyzes the reversible retro-aldol cleavage of 4-hydroxy-2-oxovalerate to pyruvate and acetaldehyde. This Novosphingobium aromaticivorans (Sphingomonas aromaticivorans) protein is 4-hydroxy-2-oxovalerate aldolase (bphF).